Consider the following 142-residue polypeptide: uncharacterized protein (142 aa).

The 141-residue stretch at 2 to 142 (IHMKQLTSKE…IESYLFRKPV (141 aa)) folds into the N-acetyltransferase domain.

The protein belongs to the acetyltransferase family.

This is an uncharacterized protein from Bacillus subtilis (strain 168).